A 261-amino-acid polypeptide reads, in one-letter code: 4-hydroxy-tetrahydrodipicolinate reductase (261 aa).

9–14 (GCLGRM) contributes to the NAD(+) binding site. An NADP(+)-binding site is contributed by Arg36. NAD(+)-binding positions include 97 to 99 (GTT) and 118 to 121 (SANM). His151 acts as the Proton donor/acceptor in catalysis. His152 lines the (S)-2,3,4,5-tetrahydrodipicolinate pocket. Lys155 (proton donor) is an active-site residue. 161–162 (GT) is a binding site for (S)-2,3,4,5-tetrahydrodipicolinate.

The protein belongs to the DapB family.

The protein localises to the cytoplasm. It catalyses the reaction (S)-2,3,4,5-tetrahydrodipicolinate + NAD(+) + H2O = (2S,4S)-4-hydroxy-2,3,4,5-tetrahydrodipicolinate + NADH + H(+). It carries out the reaction (S)-2,3,4,5-tetrahydrodipicolinate + NADP(+) + H2O = (2S,4S)-4-hydroxy-2,3,4,5-tetrahydrodipicolinate + NADPH + H(+). Its pathway is amino-acid biosynthesis; L-lysine biosynthesis via DAP pathway; (S)-tetrahydrodipicolinate from L-aspartate: step 4/4. Catalyzes the conversion of 4-hydroxy-tetrahydrodipicolinate (HTPA) to tetrahydrodipicolinate. This Wolbachia pipientis wMel protein is 4-hydroxy-tetrahydrodipicolinate reductase.